Here is a 103-residue protein sequence, read N- to C-terminus: Large ribosomal subunit protein bL21 (103 aa).

Belongs to the bacterial ribosomal protein bL21 family. In terms of assembly, part of the 50S ribosomal subunit. Contacts protein L20.

This protein binds to 23S rRNA in the presence of protein L20. The polypeptide is Large ribosomal subunit protein bL21 (Burkholderia mallei (strain NCTC 10247)).